A 185-amino-acid chain; its full sequence is MTGKLIWLMGASGSGKDSLLTELRQREQTQLLVAHRYITRAASAGSENHIALSEQEFFTRAGQNLLALSWHANGLYYGVGVEIDLWLHAGFDVVVNGSRAHLPQARARYQSALLPVCLQVSPEILRQRLENRGRENASEINARLARAARYTPQDCLTLNNDGSLRQSVDKLLTLIHQKEKHHACL.

The protein belongs to the ribose 1,5-bisphosphokinase family.

It catalyses the reaction alpha-D-ribose 1,5-bisphosphate + ATP = 5-phospho-alpha-D-ribose 1-diphosphate + ADP. It participates in metabolic intermediate biosynthesis; 5-phospho-alpha-D-ribose 1-diphosphate biosynthesis; 5-phospho-alpha-D-ribose 1-diphosphate from D-ribose 5-phosphate (route II): step 3/3. Its function is as follows. Catalyzes the phosphorylation of ribose 1,5-bisphosphate to 5-phospho-D-ribosyl alpha-1-diphosphate (PRPP). In Escherichia coli (strain SMS-3-5 / SECEC), this protein is Ribose 1,5-bisphosphate phosphokinase PhnN.